A 62-amino-acid chain; its full sequence is UPF0434 protein ASA_1553 (62 aa).

This sequence belongs to the UPF0434 family.

The sequence is that of UPF0434 protein ASA_1553 from Aeromonas salmonicida (strain A449).